We begin with the raw amino-acid sequence, 2089 residues long: Non-reducing polyketide synthase PKS16 (2089 aa).

The tract at residues 8-243 is N-terminal acylcarrier protein transacylase (SAT) domain (SAT); that stretch reads VLFGDQTVDP…IKLPITAAFH (236 aa). Residues 342-364 form a disordered region; sequence AGIEVSRSTEMQPRQEQRTKPRS. Residues 354 to 364 show a composition bias toward basic and acidic residues; it reads PRQEQRTKPRS. A Ketosynthase family 3 (KS3) domain is found at 364–793; sequence SSDIAIIGYA…GGNTSLLIED (430 aa). Catalysis depends on for beta-ketoacyl synthase activity residues Cys536, His671, and His710. Residues 891-1214 form a malonyl-CoA:ACP transacylase (MAT) domain region; the sequence is VFLFTGQGSQ…SIANAYNSGV (324 aa). A product template (PT) domain region spans residues 1273–1586; it reads TTCLQVIENE…KRTTLQSLLG (314 aa). Residues 1276-1408 are N-terminal hotdog fold; it reads LQVIENETFT…CTVMYGDGHQ (133 aa). One can recognise a PKS/mFAS DH domain in the interval 1276–1582; the sequence is LQVIENETFT…FQQMKRTTLQ (307 aa). Catalysis depends on His1309, which acts as the Proton acceptor; for dehydratase activity. The segment at 1435–1582 is C-terminal hotdog fold; the sequence is IHRMLKEMIY…FQQMKRTTLQ (148 aa). Asp1495 functions as the Proton donor; for dehydratase activity in the catalytic mechanism. Residues 1617 to 1694 enclose the Carrier 1 domain; the sequence is QSPVAGFSKV…ELRAFFLDKM (78 aa). Ser1654 carries the O-(pantetheine 4'-phosphoryl)serine modification. The segment at 1697-1730 is disordered; it reads PQATANDDDSDDSSDDEGPGFSRSQSNSTISTPE. Over residues 1702–1714 the composition is skewed to acidic residues; that stretch reads NDDDSDDSSDDEG. A compositionally biased stretch (polar residues) spans 1718-1728; sequence SRSQSNSTIST. Residues 1729–1806 enclose the Carrier 2 domain; that stretch reads PEEPDVVNVL…DVQKALGAAP (78 aa). Ser1766 carries the post-translational modification O-(pantetheine 4'-phosphoryl)serine. The segment at 1848-2083 is thioesterase (TE) domain; sequence LFLLPDGAGS…VVGGNHFSIM (236 aa).

Its pathway is secondary metabolite biosynthesis. Non-reducing polyketide synthase; part of the gene cluster that mediates the biosynthesis of orcinol depsidone grayanic acid (GRA), the only major secondary metabolite known in C.grayi. The first step consists in the ring and depside synthesis by PKS16 leading to 4-O-demethylsphaerophorin, involving different orcinol-like rings, one with acetyl CoA and the other with octanoyl CoA as the starter. Further depsidone formation by the GRA cluster-specific cytochrome P450 leads to 4-O-demethylgrayanic acid. Finally, the cluster specific O-methyltransferase probably converts the 4-O-demethylgrayanic acid into grayanic acid. The polypeptide is Non-reducing polyketide synthase PKS16 (Cladonia grayi (Gray's cup lichen)).